The sequence spans 362 residues: Ferredoxin--NADP reductase, leaf-type isozyme, chloroplastic (362 aa).

The segment at 1–20 (MATAVSAAVSLPSSKSTSFS) is disordered. The transit peptide at 1–62 (MATAVSAAVS…RAQVTTEAPA (62 aa)) directs the protein to the chloroplast. Over residues 10–20 (SLPSSKSTSFS) the composition is skewed to low complexity. The FAD-binding FR-type domain occupies 83 to 205 (KEPYVGRCLL…TGPVGKEMLM (123 aa)). Residues 141 to 144 (RLYS), 162 to 164 (CVK), Tyr-168, 179 to 181 (VCS), and Thr-220 each bind FAD. Ser-144 and Lys-164 together coordinate NADP(+). NADP(+) is bound by residues Thr-220, 252–253 (VP), 282–283 (SR), Lys-292, 321–322 (GL), and Glu-360.

This sequence belongs to the ferredoxin--NADP reductase type 1 family. FAD is required as a cofactor.

It is found in the plastid. It localises to the chloroplast stroma. The protein resides in the chloroplast thylakoid membrane. The catalysed reaction is 2 reduced [2Fe-2S]-[ferredoxin] + NADP(+) + H(+) = 2 oxidized [2Fe-2S]-[ferredoxin] + NADPH. It functions in the pathway energy metabolism; photosynthesis. Its function is as follows. May play a key role in regulating the relative amounts of cyclic and non-cyclic electron flow to meet the demands of the plant for ATP and reducing power. The protein is Ferredoxin--NADP reductase, leaf-type isozyme, chloroplastic (PETH) of Nicotiana tabacum (Common tobacco).